The chain runs to 156 residues: Probable chemoreceptor glutamine deamidase CheD (156 aa).

The protein belongs to the CheD family.

It catalyses the reaction L-glutaminyl-[protein] + H2O = L-glutamyl-[protein] + NH4(+). Its function is as follows. Probably deamidates glutamine residues to glutamate on methyl-accepting chemotaxis receptors (MCPs), playing an important role in chemotaxis. The chain is Probable chemoreceptor glutamine deamidase CheD from Sulfurimonas denitrificans (strain ATCC 33889 / DSM 1251) (Thiomicrospira denitrificans (strain ATCC 33889 / DSM 1251)).